The primary structure comprises 294 residues: Elongation factor Ts (294 aa).

The tract at residues 80 to 83 is involved in Mg(2+) ion dislocation from EF-Tu; it reads TDFV.

The protein belongs to the EF-Ts family.

Its subcellular location is the cytoplasm. Functionally, associates with the EF-Tu.GDP complex and induces the exchange of GDP to GTP. It remains bound to the aminoacyl-tRNA.EF-Tu.GTP complex up to the GTP hydrolysis stage on the ribosome. The polypeptide is Elongation factor Ts (Listeria monocytogenes serovar 1/2a (strain ATCC BAA-679 / EGD-e)).